The sequence spans 428 residues: Magnesium transporter MRS2-C (428 aa).

A run of 2 helical transmembrane segments spans residues 364–384 (LLLT…GVFG) and 400–420 (WTLV…IWYF). The Required for magnesium transport activity signature appears at 384-386 (GMN).

Belongs to the CorA metal ion transporter (MIT) (TC 1.A.35.5) family.

The protein resides in the membrane. In terms of biological role, magnesium transporter that may mediate the influx of magnesium. The protein is Magnesium transporter MRS2-C of Oryza sativa subsp. indica (Rice).